The primary structure comprises 480 residues: Ribulose bisphosphate carboxylase large chain (480 aa).

The propeptide occupies 1-2; sequence MS. Pro-3 carries the post-translational modification N-acetylproline. Lys-14 bears the N6,N6,N6-trimethyllysine mark. Residues Asn-123 and Thr-173 each coordinate substrate. Lys-175 serves as the catalytic Proton acceptor. Residue Lys-177 participates in substrate binding. Mg(2+) is bound by residues Lys-201, Asp-203, and Glu-204. N6-carboxylysine is present on Lys-201. Catalysis depends on His-294, which acts as the Proton acceptor. Residues Arg-295, His-327, and Ser-379 each coordinate substrate.

This sequence belongs to the RuBisCO large chain family. Type I subfamily. In terms of assembly, heterohexadecamer of 8 large chains and 8 small chains; disulfide-linked. The disulfide link is formed within the large subunit homodimers. Mg(2+) is required as a cofactor. The disulfide bond which can form in the large chain dimeric partners within the hexadecamer appears to be associated with oxidative stress and protein turnover.

It localises to the plastid. Its subcellular location is the chloroplast. It carries out the reaction 2 (2R)-3-phosphoglycerate + 2 H(+) = D-ribulose 1,5-bisphosphate + CO2 + H2O. The catalysed reaction is D-ribulose 1,5-bisphosphate + O2 = 2-phosphoglycolate + (2R)-3-phosphoglycerate + 2 H(+). RuBisCO catalyzes two reactions: the carboxylation of D-ribulose 1,5-bisphosphate, the primary event in carbon dioxide fixation, as well as the oxidative fragmentation of the pentose substrate in the photorespiration process. Both reactions occur simultaneously and in competition at the same active site. The protein is Ribulose bisphosphate carboxylase large chain of Acorus calamus var. americanus (American sweet flag).